The chain runs to 275 residues: NH(3)-dependent NAD(+) synthetase (275 aa).

46–53 (GISGGQDS) provides a ligand contact to ATP. D52 lines the Mg(2+) pocket. R140 provides a ligand contact to deamido-NAD(+). T160 serves as a coordination point for ATP. A Mg(2+)-binding site is contributed by E165. Residues K173 and D180 each coordinate deamido-NAD(+). Positions 189 and 211 each coordinate ATP. 260–261 (HK) is a binding site for deamido-NAD(+).

It belongs to the NAD synthetase family. Homodimer.

The enzyme catalyses deamido-NAD(+) + NH4(+) + ATP = AMP + diphosphate + NAD(+) + H(+). The protein operates within cofactor biosynthesis; NAD(+) biosynthesis; NAD(+) from deamido-NAD(+) (ammonia route): step 1/1. Its function is as follows. Catalyzes the ATP-dependent amidation of deamido-NAD to form NAD. Uses ammonia as a nitrogen source. This is NH(3)-dependent NAD(+) synthetase from Shigella flexneri serotype 5b (strain 8401).